Consider the following 803-residue polypeptide: Phenylalanine--tRNA ligase beta subunit (803 aa).

One can recognise a tRNA-binding domain in the interval 39-150 (AKVLAPFTIA…ADAPVGAAYA (112 aa)). The B5 domain occupies 400 to 475 (ADDKIIDFPL…RIVGVDKVPL (76 aa)). Residues Asp-453, Asp-459, Glu-462, and Glu-463 each contribute to the Mg(2+) site. In terms of domain architecture, FDX-ACB spans 709 to 802 (SAFHPVSRDF…VTKKTGGSLR (94 aa)).

This sequence belongs to the phenylalanyl-tRNA synthetase beta subunit family. Type 1 subfamily. As to quaternary structure, tetramer of two alpha and two beta subunits. Mg(2+) serves as cofactor.

Its subcellular location is the cytoplasm. It catalyses the reaction tRNA(Phe) + L-phenylalanine + ATP = L-phenylalanyl-tRNA(Phe) + AMP + diphosphate + H(+). This chain is Phenylalanine--tRNA ligase beta subunit, found in Rhodopseudomonas palustris (strain ATCC BAA-98 / CGA009).